The primary structure comprises 282 residues: Hydroxyacylglutathione hydrolase-like protein (282 aa).

Positions 54, 56, 58, 59, 110, 134, and 173 each coordinate Zn(2+).

The protein belongs to the metallo-beta-lactamase superfamily. Glyoxalase II family. It depends on Zn(2+) as a cofactor.

Functionally, hydrolase acting on ester bonds. The polypeptide is Hydroxyacylglutathione hydrolase-like protein (HAGHL) (Gallus gallus (Chicken)).